A 273-amino-acid chain; its full sequence is Dermonecrotic toxin LhSicTox-alphaIA2ai (273 aa).

Histidine 5 is an active-site residue. Positions 25 and 27 each coordinate Mg(2+). The active-site Nucleophile is histidine 41. 2 disulfide bridges follow: cysteine 45-cysteine 51 and cysteine 47-cysteine 190. Aspartate 85 serves as a coordination point for Mg(2+).

This sequence belongs to the arthropod phospholipase D family. Class II subfamily. It depends on Mg(2+) as a cofactor. As to expression, expressed by the venom gland.

It localises to the secreted. It carries out the reaction an N-(acyl)-sphingosylphosphocholine = an N-(acyl)-sphingosyl-1,3-cyclic phosphate + choline. It catalyses the reaction an N-(acyl)-sphingosylphosphoethanolamine = an N-(acyl)-sphingosyl-1,3-cyclic phosphate + ethanolamine. The catalysed reaction is a 1-acyl-sn-glycero-3-phosphocholine = a 1-acyl-sn-glycero-2,3-cyclic phosphate + choline. The enzyme catalyses a 1-acyl-sn-glycero-3-phosphoethanolamine = a 1-acyl-sn-glycero-2,3-cyclic phosphate + ethanolamine. In terms of biological role, dermonecrotic toxins cleave the phosphodiester linkage between the phosphate and headgroup of certain phospholipids (sphingolipid and lysolipid substrates), forming an alcohol (often choline) and a cyclic phosphate. This toxin acts on sphingomyelin (SM). It may also act on ceramide phosphoethanolamine (CPE), lysophosphatidylcholine (LPC) and lysophosphatidylethanolamine (LPE), but not on lysophosphatidylserine (LPS), and lysophosphatidylglycerol (LPG). It acts by transphosphatidylation, releasing exclusively cyclic phosphate products as second products. Induces dermonecrosis, hemolysis, increased vascular permeability, edema, inflammatory response, and platelet aggregation. The sequence is that of Dermonecrotic toxin LhSicTox-alphaIA2ai from Loxosceles hirsuta (Recluse spider).